The following is a 205-amino-acid chain: uncharacterized protein (205 aa).

A disordered region spans residues 72–114 (ARVSPYGYESDSENEEYTRISSATSSNVLTDSPTTTQDDPTGR). Over residues 90–100 (RISSATSSNVL) the composition is skewed to polar residues. Over residues 101–110 (TDSPTTTQDD) the composition is skewed to low complexity.

This is an uncharacterized protein from Equus caballus (Horse).